The following is a 613-amino-acid chain: Proline--tRNA ligase (613 aa).

It belongs to the class-II aminoacyl-tRNA synthetase family. ProS type 1 subfamily. As to quaternary structure, homodimer.

The protein localises to the cytoplasm. It catalyses the reaction tRNA(Pro) + L-proline + ATP = L-prolyl-tRNA(Pro) + AMP + diphosphate. Catalyzes the attachment of proline to tRNA(Pro) in a two-step reaction: proline is first activated by ATP to form Pro-AMP and then transferred to the acceptor end of tRNA(Pro). As ProRS can inadvertently accommodate and process non-cognate amino acids such as alanine and cysteine, to avoid such errors it has two additional distinct editing activities against alanine. One activity is designated as 'pretransfer' editing and involves the tRNA(Pro)-independent hydrolysis of activated Ala-AMP. The other activity is designated 'posttransfer' editing and involves deacylation of mischarged Ala-tRNA(Pro). The misacylated Cys-tRNA(Pro) is not edited by ProRS. The sequence is that of Proline--tRNA ligase from Cyanothece sp. (strain PCC 7425 / ATCC 29141).